Reading from the N-terminus, the 1200-residue chain is NACHT, LRR and PYD domains-containing protein 5 (1200 aa).

A Pyrin domain is found at 57 to 148 (SLTFSSYGLQ…SEKARDDMKR (92 aa)). The segment covering 142–152 (ARDDMKRHSPE) has biased composition (basic and acidic residues). The interval 142–232 (ARDDMKRHSP…TEEQGHGGDT (91 aa)) is disordered. Residues 173–182 (QAVQQDSATA) show a composition bias toward polar residues. 2 stretches are compositionally biased toward low complexity: residues 192–202 (QAMEQEGATAA) and 209–221 (ISQA…ATAA). Residues 280 to 602 (RTVVLHGKSG…ALYYVLEGLE (323 aa)) form the NACHT domain. An ATP-binding site is contributed by 286 to 293 (GKSGIGKS). 13 LRR repeats span residues 704–727 (LNSF…SFCL), 730–753 (CPYL…AEAC), 780–803 (HPHL…TLCA), 809–832 (TCKI…LWRI), 836–863 (NRNL…ALKH), 865–892 (KCLL…ILTT), 893–916 (SPSL…PLSD), 950–973 (NRSL…LLCR), 979–1002 (HCSL…FLAL), 1007–1034 (NSWL…VMRE), 1036–1059 (SCHL…SLSC), 1064–1092 (SRHL…LKQK), and 1121–1142 (NRHL…MMKL).

This sequence belongs to the NLRP family. Component of the subcortical maternal complex (SCMC), at least composed of NLRP5, KHDC3, OOEP, and TLE6 isoform 1. Within the complex, interacts with OOEP, KHDC3L and TLE6. The SCMC may facilitate translocation of its components between the nuclear and cytoplasmic compartments. As part of the SCMC interacts with the SCMC-associated protein ZBED3. As part of the SCMC interacts with the SCMC-associated protein CFL1/Cofilin-1. Interacts with PRKCE. Interacts with TUBB3 at cytoskeleton microtubules. Phosphorylated by PRKCE. As to expression, expressed in cumulus cells (at protein level). Highly abundant in oocytes and early embryos, however poorly expressed in somatic tissues such as the liver and spinal cord.

The protein localises to the cytoplasm. It is found in the cytoplasmic vesicle. It localises to the secretory vesicle. Its subcellular location is the cortical granule. The protein resides in the mitochondrion. The protein localises to the nucleus. It is found in the nucleolus. It localises to the golgi apparatus. In terms of biological role, component of the subcortical maternal complex (SCMC), a multiprotein complex that plays a key role in early embryonic development. The SCMC complex is a structural constituent of cytoplasmic lattices, which consist in fibrous structures found in the cytoplasm of oocytes and preimplantation embryos. They are required to store maternal proteins critical for embryonic development, such as proteins that control epigenetic reprogramming of the preimplantation embryo, and prevent their degradation or activation. Required for the localization of cortical granules to the cortex of oocytes, via association with the cortical actin scaffold. Required for cortical actin clearance prior to oocyte exocytosis and prevention of polyspermy. Involved in regulating post-fertilization Ca(2+) release and endoplasmic reticulum storage (ER) storage via regulation of cellular localization. May be involved in the localization of mitochondria to the cytoplasm and perinuclear region in oocytes and early stage embryos, independent of its role in CPL formation. The chain is NACHT, LRR and PYD domains-containing protein 5 (NLRP5) from Homo sapiens (Human).